A 455-amino-acid polypeptide reads, in one-letter code: Squamosa promoter-binding-like protein 16 (455 aa).

The SBP-type zinc finger occupies 115-192 (CPSCAVDGCK…DGHNRRRRKP (78 aa)). 8 residues coordinate Zn(2+): Cys118, Cys123, Cys140, His143, Cys159, Cys162, His166, and Cys178. The Bipartite nuclear localization signal motif lies at 175–191 (KRSCRKRLDGHNRRRRK). A disordered region spans residues 182–204 (LDGHNRRRRKPQPDPMNSASYLA).

Expressed in young panicles.

It localises to the nucleus. Functionally, trans-acting factor that binds specifically to the consensus nucleotide sequence 5'-TNCGTACAA-3'. May be involved in panicle development. The sequence is that of Squamosa promoter-binding-like protein 16 (SPL16) from Oryza sativa subsp. japonica (Rice).